We begin with the raw amino-acid sequence, 497 residues long: MSDHEGASPASSAPSSPLVPVSPRSDHNAPESPSGDVADLYKDDDSPLAPRSPASPRKSPENSPVGSPVKTTKVVISSDEDSDDEGPSSKKQRAVLSDSDASDTEATTKKSRITLDSDDSDQEGDKQQKRKDLFGDDSDDDDFDRPKKQNDDLDELVKGDLEEDRGEQQRPIYDSDDDDGPSDRRGGRNFEWDFDKMLAEKKAERKRKTRRGKDGGIDIINDDDGMVAKLVEKMKHAAKSDRNANVERKPAFQKIKMLPEVKAIMLRAGIVEVLIENGFMSALSEWLAPLPDKCLPALDIRITVLKLLHNPRFWKLDRSTLKQSGLGKAVMMLYKHPNETKENKAIANKLIGEWARPIYHLDTDYSTVSRQEREERDYSRMPEKRKKKLHSREEEPDEDEAPKRPRIRDAEGLGPTKSLDLKPGDKGYINRARVPKPSTKDYVIRPEWRVSGEFKGEKKASGSKRYDQTLRDFQERTRKSKANRLVKVSLEGRNMGI.

The segment at 1–191 (MSDHEGASPA…SDRRGGRNFE (191 aa)) is disordered. Low complexity-rich tracts occupy residues 7–23 (ASPA…PVSP) and 47–57 (PLAPRSPASPR). Basic and acidic residues-rich tracts occupy residues 123–134 (EGDKQQKRKDLF), 144–160 (DRPK…VKGD), and 181–191 (PSDRRGGRNFE). Positions 281 to 361 (SALSEWLAPL…GEWARPIYHL (81 aa)) constitute a TFIIS N-terminal domain. The disordered stretch occupies residues 369–433 (SRQEREERDY…GDKGYINRAR (65 aa)). Basic and acidic residues-rich tracts occupy residues 370–382 (RQER…SRMP) and 401–411 (APKRPRIRDAE).

The protein belongs to the IWS1 family.

The protein resides in the nucleus. The sequence is that of IWS1-like protein from Caenorhabditis briggsae.